A 350-amino-acid polypeptide reads, in one-letter code: Tetraacyldisaccharide 4'-kinase (350 aa).

Residue 48-55 (SAGGTGKT) participates in ATP binding.

It belongs to the LpxK family.

The enzyme catalyses a lipid A disaccharide + ATP = a lipid IVA + ADP + H(+). The protein operates within glycolipid biosynthesis; lipid IV(A) biosynthesis; lipid IV(A) from (3R)-3-hydroxytetradecanoyl-[acyl-carrier-protein] and UDP-N-acetyl-alpha-D-glucosamine: step 6/6. In terms of biological role, transfers the gamma-phosphate of ATP to the 4'-position of a tetraacyldisaccharide 1-phosphate intermediate (termed DS-1-P) to form tetraacyldisaccharide 1,4'-bis-phosphate (lipid IVA). The chain is Tetraacyldisaccharide 4'-kinase from Chlorobium limicola (strain DSM 245 / NBRC 103803 / 6330).